A 118-amino-acid polypeptide reads, in one-letter code: Disulfide bond formation protein (118 aa).

Positions 1–27 (MRAKWLWMTAVGSLLITVLTAWGWAAA) are cleaved as a signal peptide. Residues 28 to 114 (SSQDSKIVYV…VAEAVLRSFF (87 aa)) form the Thioredoxin domain. A disulfide bridge connects residues Cys-42 and Cys-45.

The protein belongs to the thioredoxin family.

It is found in the secreted. Stimulates the oxidation and reduction of disulfide bonds in vitro. This Brevibacillus choshinensis protein is Disulfide bond formation protein (bdb).